The following is a 106-amino-acid chain: Colipase A (106 aa).

An N-terminal signal peptide occupies residues 1–11 (LLLVALAVAYA). Residues 12-16 (VPDPR) constitute a propeptide, enterostatin, activation peptide. Intrachain disulfides connect C28-C39, C34-C50, C38-C72, C60-C80, and C74-C98. W63 provides a ligand contact to taurodeoxycholate.

This sequence belongs to the colipase family. As to quaternary structure, forms a 1:1 stoichiometric complex with pancreatic lipase. As to expression, expressed by the pancreas.

The protein resides in the secreted. Functionally, colipase is a cofactor of pancreatic lipase. It allows the lipase to anchor itself to the lipid-water interface. Without colipase the enzyme is washed off by bile salts, which have an inhibitory effect on the lipase. Its function is as follows. Enterostatin has a biological activity as a satiety signal. The polypeptide is Colipase A (CLPS1) (Equus caballus (Horse)).